An 800-amino-acid chain; its full sequence is Probable inorganic carbon transporter subunit DabA (800 aa).

Zn(2+)-binding residues include C329, D331, H488, and C503.

Belongs to the inorganic carbon transporter (TC 9.A.2) DabA family. Forms a complex with DabB. Requires Zn(2+) as cofactor.

The protein resides in the cell inner membrane. In terms of biological role, part of an energy-coupled inorganic carbon pump. This Roseobacter denitrificans (strain ATCC 33942 / OCh 114) (Erythrobacter sp. (strain OCh 114)) protein is Probable inorganic carbon transporter subunit DabA.